We begin with the raw amino-acid sequence, 265 residues long: O-methyltransferase NEC2 (265 aa).

This sequence belongs to the methyltransferase superfamily.

The enzyme catalyses desmethylnectriapyrone + S-adenosyl-L-methionine = nectriapyrone + S-adenosyl-L-homocysteine + H(+). Functionally, O-methyltransferase; part of the gene cluster that mediates the biosynthesis of nectriapyrone and its analogs phomopyrone A, acropyrone and zaepyrone. The nectriapyrone biosynthetic gene cluster consists of two genes, the highly reducing polyketide synthase NEC1 that produces a demethylated analog of nectriapyrone from one unit of acetyl-CoA and one unit of malonyl-CoA; and the O-methyltransferase NEC2 that further methylates the NEC1 product to yield nectriapyrone. Nectriapyrone is further hydrolyzed to nectriapyrone D, also known as gulypyrone B, by an unidentified hydrolase localized outside the nectriapyrone cluster. The chain is O-methyltransferase NEC2 from Pyricularia oryzae (strain 70-15 / ATCC MYA-4617 / FGSC 8958) (Rice blast fungus).